A 36-amino-acid chain; its full sequence is Toxin Iob1 (36 aa).

3 cysteine pairs are disulfide-bonded: C6–C21, C13–C26, and C20–C33.

Its subcellular location is the secreted. Functionally, binds reversibly and blocks N-type voltage-gated calcium channels (Cav). The sequence is that of Toxin Iob1 from Isyndus obscurus (Assassin bug).